Reading from the N-terminus, the 367-residue chain is Anhydro-N-acetylmuramic acid kinase (367 aa).

An ATP-binding site is contributed by 11–18 (GTSLDGVD).

The protein belongs to the anhydro-N-acetylmuramic acid kinase family.

It carries out the reaction 1,6-anhydro-N-acetyl-beta-muramate + ATP + H2O = N-acetyl-D-muramate 6-phosphate + ADP + H(+). The protein operates within amino-sugar metabolism; 1,6-anhydro-N-acetylmuramate degradation. It functions in the pathway cell wall biogenesis; peptidoglycan recycling. In terms of biological role, catalyzes the specific phosphorylation of 1,6-anhydro-N-acetylmuramic acid (anhMurNAc) with the simultaneous cleavage of the 1,6-anhydro ring, generating MurNAc-6-P. Is required for the utilization of anhMurNAc either imported from the medium or derived from its own cell wall murein, and thus plays a role in cell wall recycling. This chain is Anhydro-N-acetylmuramic acid kinase, found in Rhodopseudomonas palustris (strain HaA2).